The primary structure comprises 365 residues: Protein YIM1 (365 aa).

Belongs to the YIM1 family.

Its subcellular location is the lipid droplet. The protein localises to the mitochondrion. The chain is Protein YIM1 (YIM1) from Saccharomyces cerevisiae (strain RM11-1a) (Baker's yeast).